A 565-amino-acid chain; its full sequence is NAD-dependent malic enzyme (565 aa).

Tyr-104 functions as the Proton donor in the catalytic mechanism. Residue Arg-157 participates in NAD(+) binding. The active-site Proton acceptor is Lys-175. A divalent metal cation-binding residues include Glu-246, Asp-247, and Asp-270. NAD(+) contacts are provided by Asp-270 and Asn-418.

Belongs to the malic enzymes family. Homotetramer. It depends on Mg(2+) as a cofactor. Mn(2+) serves as cofactor.

The catalysed reaction is (S)-malate + NAD(+) = pyruvate + CO2 + NADH. It catalyses the reaction oxaloacetate + H(+) = pyruvate + CO2. This is NAD-dependent malic enzyme from Serratia proteamaculans (strain 568).